Reading from the N-terminus, the 578-residue chain is MIRLNWLFRSSSVLLRSQVRLLHVGDANVLHSEVDKQSAEYKENAREMASLVGDLRNFTSQVLKGGGQKAIERHTSRGKLLARERINLLLDKGSPFLELSALAGHELYGEEVVNSGGIVTGVGRVCGTECLVVANDATVKGGSYYPITVKKHLRAQEIAQENRLPCIYLVDSGGANLPRQADVFPDKLHFGRIFYNQANMSAQGIPQIAVVMGSCTAGGAYVPAMADESIIVKKQGTIFLAGPPLVKAATGEEVSAEDLGGADLHCKTSGVTDHYALDDEHALYLARQIVSNLNLSATNSYNDQLMHSSQVNFQTATPPSAVEEPRYDAEELYGIVGPNLTKSFDVREVIARIVDGSRFTEFKKLYGETLVCGFAKLYGHTVGIVGNNGVLFSESALKGAHFIQLCAQRKIPLVFLQNITGFMVGRDAEANGIAKNGAKMVTAVACANVPKFTVIIGGSYGAGNYGMCGRAYSPRFLYMWPNSRISVMGGTQAANVMAQITEDQRKRAGKEFSEEEAQKLKAPIVEMFEAEGSPYYSTARLWDDGIIDPANTRQILGLSLKAALNNAGQETKFGVFRM.

A mitochondrion-targeting transit peptide spans 1–29 (MIRLNWLFRSSSVLLRSQVRLLHVGDANV). In terms of domain architecture, CoA carboxyltransferase N-terminal spans 48-305 (MASLVGDLRN…SATNSYNDQL (258 aa)). Positions 48–570 (MASLVGDLRN…KAALNNAGQE (523 aa)) are carboxyltransferase. The 250-residue stretch at 321 to 570 (AVEEPRYDAE…KAALNNAGQE (250 aa)) folds into the CoA carboxyltransferase C-terminal domain. The interval 355–388 (DGSRFTEFKKLYGETLVCGFAKLYGHTVGIVGNN) is acyl-CoA binding.

This sequence belongs to the AccD/PCCB family. As to expression, expressed in third instar larval ring gland (lateral and medial secretory cells and corpus cardiacum cells) and CNS.

It is found in the mitochondrion matrix. The enzyme catalyses 3-methylbut-2-enoyl-CoA + hydrogencarbonate + ATP = 3-methyl-(2E)-glutaconyl-CoA + ADP + phosphate + H(+). The protein operates within amino-acid degradation; L-leucine degradation; (S)-3-hydroxy-3-methylglutaryl-CoA from 3-isovaleryl-CoA: step 2/3. In terms of biological role, carboxyltransferase subunit of the 3-methylcrotonyl-CoA carboxylase, an enzyme that catalyzes the conversion of 3-methylcrotonyl-CoA to 3-methylglutaconyl-CoA, a critical step for leucine and isovaleric acid catabolism. Vital for adult survival. The sequence is that of Probable methylcrotonoyl-CoA carboxylase beta chain, mitochondrial from Drosophila melanogaster (Fruit fly).